A 181-amino-acid polypeptide reads, in one-letter code: Protein Abitram (181 aa).

It belongs to the ABITRAM family. Interacts with F-actin. Interacts with G-actin.

The protein localises to the nucleus speckle. Its subcellular location is the cell projection. It localises to the lamellipodium. It is found in the nucleus. The protein resides in the growth cone. The protein localises to the dendrite. In terms of biological role, actin-binding protein that regulates actin polymerization, filopodia dynamics and increases the branching of proximal dendrites of developing neurons. This is Protein Abitram from Homo sapiens (Human).